The primary structure comprises 145 residues: Shadow of prion protein (145 aa).

Positions 1–24 (MNWAAAVCWALLLAATFLCDGSAA) are cleaved as a signal peptide. N-linked (GlcNAc...) asparagine glycosylation is present at N105. S119 carries the GPI-anchor amidated serine lipid modification. A propeptide spans 120–145 (GAGPTGHRHLCPLLGGALGALRLLRP) (removed in mature form).

It belongs to the SPRN family. In terms of processing, N-glycosylated. Mainly expressed in brain.

The protein localises to the cell membrane. Functionally, prion-like protein that has PrP(C)-like neuroprotective activity. May act as a modulator for the biological actions of normal and abnormal PrP. The protein is Shadow of prion protein (SPRN) of Ovis aries (Sheep).